Here is a 346-residue protein sequence, read N- to C-terminus: Sensor histidine kinase GraS (346 aa).

Transmembrane regions (helical) follow at residues 15–35 and 43–63; these read MNWI…SLID and LFYI…LTYF. In terms of domain architecture, Histidine kinase spans 126-332; it reads EFVHDIKTPV…TVRLIFPLQN (207 aa).

Interacts with GraX.

It localises to the cell membrane. The catalysed reaction is ATP + protein L-histidine = ADP + protein N-phospho-L-histidine.. Its function is as follows. Member of the two-component regulatory system GraR/GraS involved in resistance against cationic antimicrobial peptides (CAMPs). Functions as a sensor protein kinase which phosphorylates GraR through the auxiliary protein GraX. In turn, GraR up-regulates many genes such as adhesins, exoproteins, transporters, toxins, and proteins involved in cell wall synthesis. Down-regulates the expression of many genes involved in RNA and amino acid synthesis or glycolysis. The polypeptide is Sensor histidine kinase GraS (graS) (Staphylococcus aureus (strain COL)).